We begin with the raw amino-acid sequence, 137 residues long: Holo-[acyl-carrier-protein] synthase (137 aa).

Mg(2+) contacts are provided by D8 and E57.

It belongs to the P-Pant transferase superfamily. AcpS family. The cofactor is Mg(2+).

It is found in the cytoplasm. It catalyses the reaction apo-[ACP] + CoA = holo-[ACP] + adenosine 3',5'-bisphosphate + H(+). Its function is as follows. Transfers the 4'-phosphopantetheine moiety from coenzyme A to a Ser of acyl-carrier-protein. In Cereibacter sphaeroides (strain ATCC 17023 / DSM 158 / JCM 6121 / CCUG 31486 / LMG 2827 / NBRC 12203 / NCIMB 8253 / ATH 2.4.1.) (Rhodobacter sphaeroides), this protein is Holo-[acyl-carrier-protein] synthase.